Reading from the N-terminus, the 241-residue chain is NAD(P)H-hydrate epimerase (241 aa).

Residues A11–C221 enclose the YjeF N-terminal domain. A (6S)-NADPHX-binding site is contributed by N65–D69. N66 and D127 together coordinate K(+). Residues G131–P137 and D160 contribute to the (6S)-NADPHX site. Position 163 (S163) interacts with K(+).

The protein belongs to the NnrE/AIBP family. Requires K(+) as cofactor.

The protein localises to the cytoplasm. Its subcellular location is the mitochondrion. The enzyme catalyses (6R)-NADHX = (6S)-NADHX. It carries out the reaction (6R)-NADPHX = (6S)-NADPHX. Its function is as follows. Catalyzes the epimerization of the S- and R-forms of NAD(P)HX, a damaged form of NAD(P)H that is a result of enzymatic or heat-dependent hydration. This is a prerequisite for the S-specific NAD(P)H-hydrate dehydratase to allow the repair of both epimers of NAD(P)HX. The protein is NAD(P)H-hydrate epimerase of Aspergillus fumigatus (strain ATCC MYA-4609 / CBS 101355 / FGSC A1100 / Af293) (Neosartorya fumigata).